The sequence spans 343 residues: MTDKVRLTTMVQAAGUAAKLGPAGLEEAIHDITRSDDPNLIVGVEGAEDAGIYRIGDNLALVETTDIITPLVDDPFTFGRIAAANALSDVYAMGGRPVTAMNLAFFPACSLPTKVLAAILAGGSDALKEAGACLVGGHTVEDNELKFGLAVTGLIDPARVVRNCTARPGDLIVITKPLGTGIVSTAIKAEMVEPVLEAEATRWMTILNAQAAELMVACRATAATDVTGFGFIGHACEMALGAKVTFRIELARVPVIPGVPALIDDGLVPAGCYRNRQHYEQHVSGKSGDPLLPLFDPQTSGGLLITFAPDDARTFLSRAGEEGLFAACIGEVEPAGGTPLVFV.

The active site involves Sec-16. Position 16 (Sec-16) is a non-standard amino acid, selenocysteine. ATP-binding positions include Lys-19 and 46–48 (GAE). Asp-49 contacts Mg(2+). Residues Asp-66, Asp-89, and 137–139 (GHT) each bind ATP. Asp-89 contributes to the Mg(2+) binding site. Residue Asp-225 coordinates Mg(2+).

Belongs to the selenophosphate synthase 1 family. Class I subfamily. As to quaternary structure, homodimer. The cofactor is Mg(2+).

The catalysed reaction is hydrogenselenide + ATP + H2O = selenophosphate + AMP + phosphate + 2 H(+). In terms of biological role, synthesizes selenophosphate from selenide and ATP. The protein is Selenide, water dikinase of Geobacter sp. (strain M21).